Reading from the N-terminus, the 388-residue chain is S-adenosylmethionine synthase (388 aa).

H16 serves as a coordination point for ATP. D18 contacts Mg(2+). A K(+)-binding site is contributed by E44. Positions 57 and 100 each coordinate L-methionine. A flexible loop region spans residues 100-110 (QSPEIAQGVDR). Residues 165–167 (DAK), D240, 246–247 (RK), A263, and K267 each bind ATP. D240 contributes to the L-methionine binding site. K271 is a binding site for L-methionine.

The protein belongs to the AdoMet synthase family. Homotetramer; dimer of dimers. Requires Mg(2+) as cofactor. K(+) serves as cofactor.

The protein localises to the cytoplasm. The enzyme catalyses L-methionine + ATP + H2O = S-adenosyl-L-methionine + phosphate + diphosphate. It functions in the pathway amino-acid biosynthesis; S-adenosyl-L-methionine biosynthesis; S-adenosyl-L-methionine from L-methionine: step 1/1. In terms of biological role, catalyzes the formation of S-adenosylmethionine (AdoMet) from methionine and ATP. The overall synthetic reaction is composed of two sequential steps, AdoMet formation and the subsequent tripolyphosphate hydrolysis which occurs prior to release of AdoMet from the enzyme. The polypeptide is S-adenosylmethionine synthase (Acinetobacter baylyi (strain ATCC 33305 / BD413 / ADP1)).